A 1393-amino-acid chain; its full sequence is ABC transporter G family member 3 (1393 aa).

Positions 1-14 (MEDKNNIELQEKAP) are enriched in basic and acidic residues. Positions 1–68 (MEDKNNIELQ…IIYQNPTPAS (68 aa)) are disordered. Residues 15–50 (DNYNNNNNNNNNNNNNNNNNNNNNNNNNNNNNNDIN) are compositionally biased toward low complexity. Residues 100–353 (VSANNISYYI…YFSSIGLAPL (254 aa)) enclose the ABC transporter 1 domain. Residue 144 to 151 (GIPGAGKS) coordinates ATP. The 226-residue stretch at 473–698 (MQYAVRFFQA…SYADGGYQGN (226 aa)) folds into the ABC transmembrane type-2 1 domain. 7 helical membrane-spanning segments follow: residues 479–499 (FFQAIFMGCVIGSLFVKMGFT), 509–529 (LVYFAMVLHIWTTIGSVEEFF), 558–578 (IPISLIEAILFSSCCYWIAGF), 585–605 (FIVFILGMALTNLIAQGIFQV), 615–635 (LASLICPAIVVLFMIMSGYMI), 640–660 (IPGWWIWLNALSPLRYVIDMV), and 724–744 (VDIVIILGFVCTFFFIFFLGV). The region spanning 783-1035 (MTFQNLNYVV…VIQHFTSAGY (253 aa)) is the ABC transporter 2 domain. An ATP-binding site is contributed by 828-835 (GPSGAGKS). The ABC transmembrane type-2 2 domain maps to 1121 to 1388 (QTILLRFLRS…FLGYLALRFI (268 aa)). A run of 6 helical transmembrane segments spans residues 1122–1142 (TILLRFLRSFIPAIVIGTLFL), 1157–1177 (LVFLGFLFGGMASIGKVPTIV), 1206–1226 (LPMMVLTAFSYWIPMFFLTGL), 1235–1255 (FFFSLSVYLLVIMCYDSLATL), 1265–1285 (IAILVSGVGLNFLGLFGGFFI), and 1364–1384 (FYNLIILGGYFCAYTFLGYLA).

Belongs to the ABC transporter superfamily. ABCG family. PDR (TC 3.A.1.205) subfamily.

It localises to the membrane. This Dictyostelium discoideum (Social amoeba) protein is ABC transporter G family member 3 (abcG3).